Here is a 166-residue protein sequence, read N- to C-terminus: Cold-inducible RNA-binding protein (166 aa).

In terms of domain architecture, RRM spans 6–84 (GKLFVGGLNF…RQIRVDQAGK (79 aa)). The interval 68 to 166 (NGKSVDGRQI…DSYDSYTTQE (99 aa)) is disordered. Gly residues predominate over residues 93–120 (YRGGSSGGRGFFRGGRGRGGGGDRGYGG). Residues 121 to 166 (SSRFENRSGGYQSSGSRDYYGRSHGSYGDRSGGSYRDSYDSYTTQE) are compositionally biased toward low complexity.

In terms of assembly, interacts with prmt1. Interacts with elavl1/elrA (via RRM3). Associates with ribosomes. Methylated on arginine residues within RGG motifs. Methylation by prmt1 promotes cytoplasmic accumulation.

The protein localises to the nucleus. It localises to the nucleoplasm. The protein resides in the cytoplasm. In terms of biological role, cold-inducible mRNA binding protein. Acts cooperatively with elavl1/elrA to stabilize AU-rich element (ARE)-containing mRNAs by binding to themm and inhibiting their deadenylation. Essential for embryonic gastrulation and neural development, acting to maintain the expression of a set of adhesion molecules, and cell movement during embryogenesis. Required for pronephros development. The protein is Cold-inducible RNA-binding protein of Xenopus tropicalis (Western clawed frog).